A 170-amino-acid polypeptide reads, in one-letter code: Peptide deformylase (170 aa).

Fe cation is bound by residues cysteine 91 and histidine 133. Glutamate 134 is an active-site residue. Histidine 137 is a Fe cation binding site.

This sequence belongs to the polypeptide deformylase family. Fe(2+) is required as a cofactor.

The catalysed reaction is N-terminal N-formyl-L-methionyl-[peptide] + H2O = N-terminal L-methionyl-[peptide] + formate. Functionally, removes the formyl group from the N-terminal Met of newly synthesized proteins. Requires at least a dipeptide for an efficient rate of reaction. N-terminal L-methionine is a prerequisite for activity but the enzyme has broad specificity at other positions. This Aliivibrio fischeri (strain ATCC 700601 / ES114) (Vibrio fischeri) protein is Peptide deformylase.